A 262-amino-acid chain; its full sequence is Lens fiber major intrinsic protein (262 aa).

The Cytoplasmic portion of the chain corresponds to 1-9 (MRELRSSSF). A helical membrane pass occupies residues 10 to 29 (WRAILAEFLGSLLYTLLGLG). Residues 30-41 (ASLRWAPGPHGV) are Extracellular-facing. Residues 42–59 (LGSALAFGLAQATLVQAL) form a helical membrane-spanning segment. At 60–61 (GH) the chain is on the cytoplasmic side. Residues 62-77 (VSGGHINPAITLAFLL) constitute an intramembrane region (discontinuously helical). The NPA 1 motif lies at 68 to 70 (NPA). At 78–82 (ASQLS) the chain is on the cytoplasmic side. A helical transmembrane segment spans residues 83 to 106 (LPRALGYLLAQLLGALAGAGVLYG). Residues 107-127 (VTPAAVRGTLGLSALHPSVGP) lie on the Extracellular side of the membrane. Residues 128-148 (GQGTVVELLLTAQFILCVFAS) form a helical membrane-spanning segment. Over 149 to 156 (FDDRHDGR) the chain is Cytoplasmic. A helical membrane pass occupies residues 157–175 (PGSAALPVGFSLALGHLFG). Over 176–178 (IPF) the chain is Extracellular. The discontinuously helical intramembrane region spans 179–193 (TGAGMNPARSFAPAV). Residues 184–186 (NPA) carry the NPA 2 motif. Topologically, residues 194-200 (ITRNFTN) are extracellular. Residues 201–222 (HWVFWAGPLLGAALAALLYELA) form a helical membrane-spanning segment. Residues 223 to 262 (LCPRARSMAERLAVLRGEPPAAAPPPEPPAEPLELKTQGL) are Cytoplasmic-facing. The interaction with CALM stretch occupies residues 227-237 (ARSMAERLAVL). The disordered stretch occupies residues 240-262 (EPPAAAPPPEPPAEPLELKTQGL). Positions 243–253 (AAAPPPEPPAE) are enriched in pro residues.

The protein belongs to the MIP/aquaporin (TC 1.A.8) family. In terms of assembly, homotetramer; each monomer provides an independent water pore. Two homotetramers on opposing membranes can dimerize, forming a cell-cell junction. Interacts with CALM; the calcium-calmodulin/CALM complex interacts with the cytoplasmic domains of two aquaporins, leading to channel closure. During early stages of lens development, interacts through its C-terminal region with Cx56 and GJA8/Cx45.6. In terms of tissue distribution, major component of lens fiber gap junctions.

The protein localises to the cell membrane. It localises to the cell junction. It catalyses the reaction H2O(in) = H2O(out). Its activity is regulated as follows. The water channel activity is inhibited by calcium through calmodulin/CALM. Functionally, aquaporins form homotetrameric transmembrane channels, with each monomer independently mediating water transport across the plasma membrane along its osmotic gradient. Specifically expressed in lens fiber cells, this aquaporin is crucial for maintaining lens water homeostasis and transparency. Beyond water permeability, it also acts as a cell-to-cell adhesion molecule, forming thin junctions between lens fiber cells that are essential for maintaining the ordered structure and transparency of the lens. In Gallus gallus (Chicken), this protein is Lens fiber major intrinsic protein.